Here is a 165-residue protein sequence, read N- to C-terminus: Chorismate pyruvate-lyase (165 aa).

Substrate is bound by residues M35, R77, L115, and E156.

Belongs to the UbiC family. Monomer.

The protein resides in the cytoplasm. The enzyme catalyses chorismate = 4-hydroxybenzoate + pyruvate. It functions in the pathway cofactor biosynthesis; ubiquinone biosynthesis. In terms of biological role, removes the pyruvyl group from chorismate, with concomitant aromatization of the ring, to provide 4-hydroxybenzoate (4HB) for the ubiquinone pathway. This Salmonella gallinarum (strain 287/91 / NCTC 13346) protein is Chorismate pyruvate-lyase.